The primary structure comprises 634 residues: Putative peptidoglycan O-acetyltransferase YrhL (634 aa).

Helical transmembrane passes span 10 to 30 (YIPG…TYHL), 38 to 58 (GFIG…SILL), 79 to 99 (RLLP…VLFD), 110 to 130 (AISS…LSYF), 145 to 165 (LAIE…GMYI), 172 to 192 (LAAV…VLYE), 244 to 264 (FLAF…EPFL), 270 to 290 (LFIS…SSFL), 307 to 327 (YGIY…QEIG), 329 to 349 (PVFW…ELSY), and 385 to 405 (MSIG…SGLA). Residues 413–481 (KWTYSSQETN…SQQLKKPADT (69 aa)) form a disordered region. A compositionally biased stretch (polar residues) spans 414–429 (WTYSSQETNADTSQAS). Composition is skewed to basic and acidic residues over residues 430–447 (GDKK…EQKT) and 455–470 (KENK…KKDT).

Belongs to the acyltransferase 3 family.

It is found in the cell membrane. The polypeptide is Putative peptidoglycan O-acetyltransferase YrhL (yrhL) (Bacillus subtilis (strain 168)).